Here is a 236-residue protein sequence, read N- to C-terminus: Methylosome subunit pICln (236 aa).

Ser2 is modified (N-acetylserine). The segment at Glu88–Ser109 is disordered. Ser95, Ser143, Ser192, Ser194, Ser197, and Ser209 each carry phosphoserine. Residues Ser95 to Pro107 show a composition bias toward acidic residues. The residue at position 222 (Thr222) is a Phosphothreonine.

The protein belongs to the pICln (TC 1.A.47) family. Component of the methylosome, a 20S complex containing at least PRMT5/SKB1, WDR77/MEP50 and CLNS1A/pICln. May mediate SNRPD1 and SNRPD3 methylation. Forms a 6S pICln-Sm complex composed of CLNS1A/pICln, SNRPD1, SNRPD2, SNRPE, SNRPF and SNRPG; ring-like structure where CLNS1A/pICln mimics additional Sm proteins and which is unable to assemble into the core snRNP. Interacts with LSM10 and LSM11.

The protein localises to the cytoplasm. Its subcellular location is the cytosol. It is found in the nucleus. It localises to the cytoskeleton. In terms of biological role, involved in both the assembly of spliceosomal snRNPs and the methylation of Sm proteins. Chaperone that regulates the assembly of spliceosomal U1, U2, U4 and U5 small nuclear ribonucleoproteins (snRNPs), the building blocks of the spliceosome, and thereby plays an important role in the splicing of cellular pre-mRNAs. Most spliceosomal snRNPs contain a common set of Sm proteins SNRPB, SNRPD1, SNRPD2, SNRPD3, SNRPE, SNRPF and SNRPG that assemble in a heptameric protein ring on the Sm site of the small nuclear RNA to form the core snRNP (Sm core). In the cytosol, the Sm proteins SNRPD1, SNRPD2, SNRPE, SNRPF and SNRPG are trapped in an inactive 6S pICln-Sm complex by the chaperone CLNS1A that controls the assembly of the core snRNP. Dissociation by the SMN complex of CLNS1A from the trapped Sm proteins and their transfer to an SMN-Sm complex triggers the assembly of core snRNPs and their transport to the nucleus. This is Methylosome subunit pICln (Clns1a) from Mus musculus (Mouse).